We begin with the raw amino-acid sequence, 142 residues long: COA8 family protein CBG23705, mitochondrial (142 aa).

The protein belongs to the COA8 family.

Its subcellular location is the mitochondrion inner membrane. In terms of biological role, may be required for cytochrome c complex (COX) assembly and function, COX being the terminal component of the mitochondrial respiratory chain. This is COA8 family protein CBG23705, mitochondrial from Caenorhabditis briggsae.